Consider the following 716-residue polypeptide: ATP-dependent DNA helicase DinG (716 aa).

Positions 1-114 (MALTAALKAQ…PDLKFTAAFG (114 aa)) are HD1 domain N-terminus. In terms of domain architecture, Helicase ATP-binding spans 17-294 (ALQEQIPDFI…TCMEQFRPKT (278 aa)). I26, Q31, K60, and T61 together coordinate ATP. Residues 115-216 (RGRYVCPRNL…FFVARREIQE (102 aa)) form a [4Fe-4S] domain region. [4Fe-4S] cluster-binding residues include C120, C194, C199, and C205. The tract at residues 217–261 (AEVVVANHALVMAAMESEAVLPDPKNLLLVLDEGHHLPDVARDAL) is HD1 domain middle. A DEAH box motif is present at residues 248-251 (DEGH). The segment at 262-438 (EMSAEITAPW…LHLWFHCVGI (177 aa)) is arch domain. The HD1 domain middle stretch occupies residues 439–491 (RVSDQLERLLWRSIPHIIVTSATLRSLNSFSRLQEMSGLKEKAGDRFVALDSP). Residues 492-716 (FNHCEQGKIV…KTKSPRRRRR (225 aa)) are HD2 domain. Positions 599, 656, and 659 each coordinate ATP.

It belongs to the helicase family. DinG subfamily. Type 1 sub-subfamily. In terms of assembly, monomer in solution. The cofactor is [4Fe-4S] cluster. Requires Mg(2+) as cofactor.

It carries out the reaction Couples ATP hydrolysis with the unwinding of duplex DNA at the replication fork by translocating in the 5'-3' direction. This creates two antiparallel DNA single strands (ssDNA). The leading ssDNA polymer is the template for DNA polymerase III holoenzyme which synthesizes a continuous strand.. The catalysed reaction is ATP + H2O = ADP + phosphate + H(+). ATPase activity is 15-fold stimulated by single-stranded DNA (ssDNA). Reduction of the [4Fe-4S] cluster reversibly switches off helicase activity. Remains fully active after exposure to 100-fold excess of hydrogen peroxide, but the [4Fe-4S] cluster can be efficiently modified by nitric oxide (NO), forming the DinG-bound dinitrosyl iron complex with the concomitant inactivation of helicase activity. Helicase activity on G-quadruplex DNA is inhibited by porphyrin derivatives meso-tetra (N-methyl-4-pyridyl) porphine tetra tosylate (T4) and N-methyl mesoporphyrin IX (NMM). Helicase activity on forked duplexes is not inhibited by T4 or NMM. G-quadruplex ligands such as Pyridostatin, PhenDC3, BRACO-19 and Netropsin can alter recognition and unwinding of G-quadruplex DNAs; the effect is both ligand- and G-quadruplex DNA-specific. Functionally, DNA-dependent ATPase and 5'-3' DNA helicase. Can also unwind DNA:RNA hybrid duplexes. Is active on D-loops, R-loops, and on forked structures. Unwinds G-quadruplex DNA in a 5'-3' direction; unwinding efficiency differs on different substrates. Does not appear to unwind replication forks or Holliday junctions. Translocates on single-stranded (ss)DNA with a 5'-3' polarity. In vitro at high concentrations also unwinds in a 3'-5' direction. May be involved in recombinational DNA repair and the resumption of replication after DNA damage. The [4Fe-4S] cluster is redox active at cellular potentials and is involved in DNA-mediated charge-transport signaling between DNA repair proteins from distinct pathways. DinG cooperates at long-range with endonuclease III, a base excision repair enzyme, using DNA charge transport to redistribute to regions of DNA damage. Binds 10-11 nucleotides of ssDNA in a positively-charged groove across the helicase domains. In Escherichia coli (strain K12), this protein is ATP-dependent DNA helicase DinG.